The following is a 413-amino-acid chain: Serine hydroxymethyltransferase (413 aa).

(6S)-5,6,7,8-tetrahydrofolate contacts are provided by residues Leu120 and 124–126 (GHL). Lys229 carries the N6-(pyridoxal phosphate)lysine modification. 352–354 (SPF) serves as a coordination point for (6S)-5,6,7,8-tetrahydrofolate.

The protein belongs to the SHMT family. In terms of assembly, homodimer. Requires pyridoxal 5'-phosphate as cofactor.

It is found in the cytoplasm. It catalyses the reaction (6R)-5,10-methylene-5,6,7,8-tetrahydrofolate + glycine + H2O = (6S)-5,6,7,8-tetrahydrofolate + L-serine. Its pathway is one-carbon metabolism; tetrahydrofolate interconversion. The protein operates within amino-acid biosynthesis; glycine biosynthesis; glycine from L-serine: step 1/1. In terms of biological role, catalyzes the reversible interconversion of serine and glycine with tetrahydrofolate (THF) serving as the one-carbon carrier. This reaction serves as the major source of one-carbon groups required for the biosynthesis of purines, thymidylate, methionine, and other important biomolecules. Also exhibits THF-independent aldolase activity toward beta-hydroxyamino acids, producing glycine and aldehydes, via a retro-aldol mechanism. The polypeptide is Serine hydroxymethyltransferase (Heliobacterium modesticaldum (strain ATCC 51547 / Ice1)).